The chain runs to 196 residues: Large ribosomal subunit protein bL25 (196 aa).

This sequence belongs to the bacterial ribosomal protein bL25 family. CTC subfamily. Part of the 50S ribosomal subunit; part of the 5S rRNA/L5/L18/L25 subcomplex. Contacts the 5S rRNA. Binds to the 5S rRNA independently of L5 and L18.

Functionally, this is one of the proteins that binds to the 5S RNA in the ribosome where it forms part of the central protuberance. The chain is Large ribosomal subunit protein bL25 from Bacteroides thetaiotaomicron (strain ATCC 29148 / DSM 2079 / JCM 5827 / CCUG 10774 / NCTC 10582 / VPI-5482 / E50).